The following is a 1351-amino-acid chain: Transcriptional regulator ovo (1351 aa).

The interval 1-31 (MPKIFLIKNRLHQQQQRLLESQNLLQHKNQD) is required for Ubr3 binding and tal-dependent proteolytic processing. 10 disordered regions span residues 22 to 77 (QNLL…SDQQ), 100 to 119 (LDHLNQNQSPNPNANANPNQ), 184 to 397 (NSPI…SDEE), 447 to 554 (AGHG…HFNA), 640 to 665 (SNSKFHNHHHHHQHNNNNNNNGGQTS), 778 to 807 (DDEESTSPRQDFELVSTPSLTPDSVTPVEQ), 834 to 887 (GSNQ…YQHA), 916 to 1000 (LLSQ…PSPT), 1023 to 1044 (PMSSSSSSGGTNSSNSSGGSSN), and 1113 to 1192 (SKHG…DSSS). Positions 49 to 60 (SPTPTSQPPPEP) are enriched in pro residues. 2 stretches are compositionally biased toward low complexity: residues 61 to 72 (QGQGQQVLGQVP) and 104 to 119 (NQNQSPNPNANANPNQ). Positions 205 to 232 (EKEKPAEREREKSDERTEQVEKEERVER) are enriched in basic and acidic residues. Residues 233-242 (EEEEDDEVDV) are compositionally biased toward acidic residues. The segment covering 262–272 (QRKEYPQEPKD) has biased composition (basic and acidic residues). Positions 324 to 340 (TPPPADQRPSPPPPRDP) are enriched in pro residues. Positions 447–486 (AGHGRNSSSSSGAAGQGFQSSGFGSQNSGSGSSSGNQNAG) are enriched in low complexity. Residues 487 to 505 (SGAGSPGSGAGGGGGMGGG) are compositionally biased toward gly residues. Residues 530–552 (KSGQQSTASNNTGQSPGANHSHF) are compositionally biased toward polar residues. A compositionally biased stretch (basic residues) spans 644 to 653 (FHNHHHHHQH). A compositionally biased stretch (polar residues) spans 793–807 (STPSLTPDSVTPVEQ). Low complexity-rich tracts occupy residues 835–878 (SNQQ…HVQQ), 916–962 (LLSQ…QQQQ), 970–979 (QQQQQPQPQS), 1025–1044 (SSSSSSGGTNSSNSSGGSSN), and 1121–1175 (HQQQ…HGSA). 4 consecutive C2H2-type zinc fingers follow at residues 1197 to 1219 (FVCRVCMKTFSLQRLLNRHMKCH), 1225 to 1247 (YLCTFCGKGFNDTFDLKRHTRTH), 1253 to 1276 (YKCNLCEKSFTQRCSLESHCQKVH), and 1292 to 1315 (YVCEECGHTTCEPEVHYLHLKNNH).

As to quaternary structure, interacts (via N-terminus) with Ubr3; the interaction is mediated by tal. N-terminus is proteolytically cleaved and ubiquitinated via a tal-dependent mechanism, leading to the proteolytic degradation of the N-terminus and the production of transcriptional activator shavenbaby, a truncated form with transcriptional activator activity.

The protein localises to the cytoplasm. The protein resides in the nucleus. It localises to the nucleoplasm. Its function is as follows. Transcriptional regulator with essential functions in the germline and soma. Plays an essential role in regulating the formation of apical cell extensions such as denticles and aristae, and initiating cytoskeletal remodeling during epidermal differentiation. Transcriptional repressor which functions in postembryonic development. The full-length unprocessed form acts as a transcriptional repressor (Transcriptional repressor svb). In terms of biological role, transcriptional activator which initiates trichome development and also promotes tarsal joint development. Has an essential somatic role regulating the tal-dependent formation of trichomes, and initiating cytoskeletal remodeling during epidermal differentiation. Function with SoxN is required for correct denticle morphogenesis on the embryonic epidermis. SoxN and svb appear to act both independently and in conjunction with each other to activate certain genes involved in denticle morphogenesis; Svb appears to be involved in regulating denticle length whereas SoxN regulates the denticle base circumference. Also functions in the development of other apical cell extensions such as bristles. Also has an important role in tarsal joint development, repressing expression of the N ligand Dl and defining its signaling boundary. Functionally, transcriptional repressor which is specifically involved in female germline development, where it functions antagonistically to isoform D. Negatively regulates expression of otu and may also have autoregulatory activity. Negatively regulates expression of piwi in the primordial germ cells (PGCs). Its function is as follows. Transcriptional activator which is specifically involved in female germline development, where it functions antagonistically to isoform C. Necessary and sufficient for normal oogenesis. Required in the primordial germ cells (PGCs) for normal development of male and female germline cells. Plays a role in germline sex determination. Binds the promoter DNA and positively regulates the transcription of the otu gene in a stage-specific manner. May have autoregulatory activity. In Drosophila melanogaster (Fruit fly), this protein is Transcriptional regulator ovo.